A 220-amino-acid polypeptide reads, in one-letter code: Ribonuclease HII (220 aa).

The region spanning 32-220 (KHIVGIDEAG…FAPIKGRYSV (189 aa)) is the RNase H type-2 domain. 3 residues coordinate a divalent metal cation: aspartate 38, glutamate 39, and aspartate 130.

The protein belongs to the RNase HII family. Mn(2+) is required as a cofactor. Mg(2+) serves as cofactor.

The protein localises to the cytoplasm. The enzyme catalyses Endonucleolytic cleavage to 5'-phosphomonoester.. Endonuclease that specifically degrades the RNA of RNA-DNA hybrids. This is Ribonuclease HII from Brucella anthropi (strain ATCC 49188 / DSM 6882 / CCUG 24695 / JCM 21032 / LMG 3331 / NBRC 15819 / NCTC 12168 / Alc 37) (Ochrobactrum anthropi).